The primary structure comprises 946 residues: DNA primase (946 aa).

A disordered region spans residues 596–626; it reads RDTEEDEDGKENKNNVPDNGVFQKTTSSVDT. A compositionally biased stretch (polar residues) spans 617–626; it reads FQKTTSSVDT. Residues 881–920 form a CHC2-type zinc finger; sequence CLNYTHRNPQETVQVFIDLRTEHSYALWASLWSRCFTKKC.

This sequence belongs to the herpesviridae DNA primase family. In terms of assembly, associates with the helicase and the primase-associated factor to form the helicase-primase factor. Interacts with host SNAPIN.

It localises to the host nucleus. Its function is as follows. Essential component of the helicase/primase complex. Unwinds the DNA at the replication forks and generates single-stranded DNA for both leading and lagging strand synthesis. The primase initiates primer synthesis and thereby produces large amount of short RNA primers on the lagging strand that the polymerase elongates using dNTPs. This is DNA primase (UL70) from Homo sapiens (Human).